The sequence spans 193 residues: Cysteine and glycine-rich protein 1 (193 aa).

The LIM zinc-binding 1 domain occupies 10–61 (CGVCQKTVYFAEEVQCEGNSFHKSCFLCMVCKKNLDSTTVAVHGEEIYCKSC). The short motif at 64–69 (KKYGPK) is the Nuclear localization signal element. Serine 81 is modified (phosphoserine). At lysine 84 the chain carries N6-acetyllysine. Residue lysine 91 forms a Glycyl lysine isopeptide (Lys-Gly) (interchain with G-Cter in SUMO2) linkage. N6-acetyllysine occurs at positions 112, 131, 137, and 161. In terms of domain architecture, LIM zinc-binding 2 spans 119 to 170 (CPRCSQAVYAAEKVIGAGKSWHKSCFRCAKCGKGLESTTLADKDGEIYCKGC). Serine 192 carries the post-translational modification Phosphoserine.

As to quaternary structure, interacts with ASCC1; ASCC2 and TRIP4.

The protein localises to the nucleus. Could play a role in neuronal development. This Mus musculus (Mouse) protein is Cysteine and glycine-rich protein 1 (Csrp1).